Here is a 384-residue protein sequence, read N- to C-terminus: Cytochrome b (384 aa).

4 helical membrane-spanning segments follow: residues 32–52 (FGSL…FLAM), 76–98 (WLLR…LHMA), 113–133 (LWNM…MGYC), and 179–199 (FFSL…LHLL). Heme b contacts are provided by His82 and His96. Residues His183 and His197 each coordinate heme b. An a ubiquinone-binding site is contributed by His202. Transmembrane regions (helical) follow at residues 225 to 245 (FLFK…FLIS), 289 to 309 (MMGV…PFVD), 321 to 341 (LSKI…LIGA), and 348 to 368 (YIII…ILLP).

Belongs to the cytochrome b family. As to quaternary structure, fungal cytochrome b-c1 complex contains 10 subunits; 3 respiratory subunits, 2 core proteins and 5 low-molecular weight proteins. Cytochrome b-c1 complex is a homodimer. It depends on heme b as a cofactor.

It is found in the mitochondrion inner membrane. Component of the ubiquinol-cytochrome c reductase complex (complex III or cytochrome b-c1 complex) that is part of the mitochondrial respiratory chain. The b-c1 complex mediates electron transfer from ubiquinol to cytochrome c. Contributes to the generation of a proton gradient across the mitochondrial membrane that is then used for ATP synthesis. The chain is Cytochrome b (COB) from Starmerella bacillaris (Yeast).